The chain runs to 345 residues: Phosphoribosylformylglycinamidine cyclo-ligase (345 aa).

It belongs to the AIR synthase family.

Its subcellular location is the cytoplasm. The catalysed reaction is 2-formamido-N(1)-(5-O-phospho-beta-D-ribosyl)acetamidine + ATP = 5-amino-1-(5-phospho-beta-D-ribosyl)imidazole + ADP + phosphate + H(+). Its pathway is purine metabolism; IMP biosynthesis via de novo pathway; 5-amino-1-(5-phospho-D-ribosyl)imidazole from N(2)-formyl-N(1)-(5-phospho-D-ribosyl)glycinamide: step 2/2. The polypeptide is Phosphoribosylformylglycinamidine cyclo-ligase (Limosilactobacillus reuteri (strain DSM 20016) (Lactobacillus reuteri)).